Here is a 629-residue protein sequence, read N- to C-terminus: Methyl-accepting chemotaxis protein PctB (629 aa).

Residues 1–10 (MIKSLKFSHK) lie on the Cytoplasmic side of the membrane. The chain crosses the membrane as a helical span at residues 11–31 (ILLAAALVVIATFSLFTLYND). Residues 32–276 (SLQRASIRED…AYAMLTKLRT (245 aa)) are Periplasmic-facing. The 224-residue stretch at 37 to 260 (SIREDLEDYL…LSGLDWYIGI (224 aa)) folds into the Cache domain. L-arginine contacts are provided by residues Y109, S115, Y121, 126–128 (RPW), E146, and D173. Residues S115, Y121, 126–128 (RPW), 144–146 (YME), and D173 contribute to the L-glutamine site. A helical membrane pass occupies residues 277–297 (SAIVAALIAVVAIVLLLGMLI). One can recognise an HAMP domain in the interval 298-352 (RVLMQPLTDMGRAMQDIAQGEGDLTKRLKVTSNDEFGALAISFNRFVERIHESIR). Residues 298–629 (RVLMQPLTDM…LRQLVDSFKI (332 aa)) are Cytoplasmic-facing. The Methyl-accepting transducer domain occupies 357–593 (TARQLHDVAQ…SLNMDITEIN (237 aa)). The interval 405 to 424 (RNAADASHHASDANHQAEDG) is disordered. Positions 410–424 (ASHHASDANHQAEDG) are enriched in basic and acidic residues.

It belongs to the methyl-accepting chemotaxis (MCP) protein family. Monomer in the absence and presence of ligands.

Its subcellular location is the cell inner membrane. In terms of biological role, chemotactic-signal transducers respond to changes in the concentration of attractants and repellents in the environment, transduce a signal from the outside to the inside of the cell, and facilitate sensory adaptation through the variation of the level of methylation. Responds to L-Arg, L-Gln, L-Ala, L-Glu, L-Lys, L-Met and L-Tyr. Also involved in repellent responses to trichloroethylene (TCE), chloroform and methylthiocyanate. This is Methyl-accepting chemotaxis protein PctB (pctB) from Pseudomonas aeruginosa (strain ATCC 15692 / DSM 22644 / CIP 104116 / JCM 14847 / LMG 12228 / 1C / PRS 101 / PAO1).